Consider the following 303-residue polypeptide: Zinc transporter ZIP9-B (303 aa).

A helical membrane pass occupies residues 7–27; the sequence is ISLLSLAMLVGCYVSGIIPLA. Asn29 carries N-linked (GlcNAc...) asparagine glycosylation. Transmembrane regions (helical) follow at residues 35-55, 102-122, 142-162, 172-192, and 206-226; these read LKLV…AVIV, AYIG…DQIG, ITTT…LGAA, LIVF…LVSF, and HLLV…LGLS. Asn237 is a glycosylation site (N-linked (GlcNAc...) asparagine). The next 2 helical transmembrane spans lie at 240–260 and 282–302; these read GVAM…HVLP and LEVC…IGHQ.

It belongs to the ZIP transporter (TC 2.A.5) family.

It localises to the golgi apparatus. The protein localises to the trans-Golgi network membrane. The protein resides in the cell membrane. It is found in the cytoplasm. Its subcellular location is the perinuclear region. It localises to the mitochondrion. The protein localises to the nucleus. It carries out the reaction Zn(2+)(in) = Zn(2+)(out). Functionally, transports zinc ions across cell and organelle membranes into the cytoplasm and regulates intracellular zinc homeostasis. Participates in the zinc ions efflux out of the secretory compartments. Regulates intracellular zinc level, resulting in the enhancement of AKT1 and MAPK3/MAPK1 (Erk1/2) phosphorylation in response to the BCR activation. Also functions as a membrane androgen receptor that mediates, through a G protein, the non-classical androgen signaling pathway, characterized by the activation of MAPK3/MAPK1 (Erk1/2) and transcription factors CREB1 or ATF1. Moreover, has dual functions as a membrane-bound androgen receptor and as an androgen-dependent zinc transporter both of which are mediated through an inhibitory G protein (Gi) that mediates both MAP kinase and zinc signaling leading to the androgen-dependent apoptotic process. The sequence is that of Zinc transporter ZIP9-B (slc39a9-b) from Xenopus laevis (African clawed frog).